We begin with the raw amino-acid sequence, 184 residues long: RNA 2',3'-cyclic phosphodiesterase (184 aa).

The active-site Proton donor is H40. Short sequence motifs (HXTX) lie at residues 40 to 43 and 125 to 128; these read HITL. Residue H125 is the Proton acceptor of the active site.

Belongs to the 2H phosphoesterase superfamily. ThpR family.

It carries out the reaction a 3'-end 2',3'-cyclophospho-ribonucleotide-RNA + H2O = a 3'-end 2'-phospho-ribonucleotide-RNA + H(+). Hydrolyzes RNA 2',3'-cyclic phosphodiester to an RNA 2'-phosphomonoester. In vitro, ligates 5' and 3' half-tRNA molecules with 2',3'-cyclic phosphate and 5'-hydroxyl termini, respectively, to the product containing the 2'-5' phosphodiester linkage. Ligase activity requires GTP, but GTP hydrolysis is not required for the reaction, which is reversible. Ligase activity is weak compared to the phosphodiesterase activity. This chain is RNA 2',3'-cyclic phosphodiesterase, found in Pyrococcus furiosus (strain ATCC 43587 / DSM 3638 / JCM 8422 / Vc1).